A 232-amino-acid chain; its full sequence is Transcriptional regulatory protein CpxR (232 aa).

In terms of domain architecture, Response regulatory spans Lys-3–Leu-115. Asp-51 is subject to 4-aspartylphosphate. Positions Ser-131–Ser-230 form a DNA-binding region, ompR/PhoB-type.

As to quaternary structure, interacts with cognate sensor kinase CpxA. Phosphorylated by CpxA.

The protein resides in the cytoplasm. The two-component system is activated by envelope stress such as overexpression of some (misfolded) periplasmic proteins. Functionally, response regulator member of the two-component regulatory system CpxA/CpxR which responds to envelope stress response by activating or, in some cases, repressing expression of downstream genes. Binds to the promoter regions of various genes in vitro, including ompC, cpxP, ryhB and mrkA and, when CpxR is phosphorylated, pecO. Represses expression of the major pilin of type 3 fimbriae MrkA as well as that of type 1 fimbriae FimA. Repression of expression of MrkA appears to be indirect, mediated by activation of the iron homeostasis regulator RyhB. The chain is Transcriptional regulatory protein CpxR from Klebsiella pneumoniae subsp. pneumoniae (strain HS11286).